A 1836-amino-acid polypeptide reads, in one-letter code: Druantia protein DruE (1836 aa).

The region spanning 108–405 is the Helicase ATP-binding domain; it reads SFLGEDASDL…FAQDLTGLSP (298 aa). 121–128 contacts ATP; that stretch reads TGTGSGKT. Residues 347–350 carry the DEAH box motif; the sequence is DEAH. In terms of domain architecture, Helicase C-terminal spans 1014 to 1199; that stretch reads DCTALMPFAL…EVKVNNPKIA (186 aa).

It is found in the cytoplasm. Component of antiviral defense system Druantia type I, composed of DruA, DruB, DruC, DruD and DruE. Expression of Druantia in E.coli (strain MG1655) confers resistance to phage lambda, SECphi18, SECphi27 and T4. This protein is probably a helicase. This chain is Druantia protein DruE, found in Escherichia coli (strain UMEA 4076-1).